Reading from the N-terminus, the 253-residue chain is Indole-3-glycerol phosphate synthase (253 aa).

Belongs to the TrpC family.

It carries out the reaction 1-(2-carboxyphenylamino)-1-deoxy-D-ribulose 5-phosphate + H(+) = (1S,2R)-1-C-(indol-3-yl)glycerol 3-phosphate + CO2 + H2O. The protein operates within amino-acid biosynthesis; L-tryptophan biosynthesis; L-tryptophan from chorismate: step 4/5. This Bacillus cereus (strain ATCC 10987 / NRS 248) protein is Indole-3-glycerol phosphate synthase.